Consider the following 353-residue polypeptide: Photosystem II protein D1 (353 aa).

Threonine 2 bears the N-acetylthreonine mark. Threonine 2 is modified (phosphothreonine). Transmembrane regions (helical) follow at residues 29–46, 118–133, and 142–156; these read YIGWFGVLMIPTLLTATS, HFLLGVACYMGREWEL, and WIAVAYSAPVAAATA. Position 118 (histidine 118) interacts with chlorophyll a. Tyrosine 126 is a binding site for pheophytin a. [CaMn4O5] cluster-binding residues include aspartate 170 and glutamate 189. A helical membrane pass occupies residues 197–218; sequence FHMLGVAGVFGGSLFSAMHGSL. Residue histidine 198 participates in chlorophyll a binding. A quinone-binding positions include histidine 215 and 264–265; that span reads SF. Histidine 215 is a binding site for Fe cation. Histidine 272 lines the Fe cation pocket. The helical transmembrane segment at 274–288 threads the bilayer; that stretch reads FLAAWPVVGIWFTAL. The [CaMn4O5] cluster site is built by histidine 332, glutamate 333, aspartate 342, and alanine 344. The propeptide occupies 345–353; the sequence is AVEAPSING.

It belongs to the reaction center PufL/M/PsbA/D family. As to quaternary structure, PSII is composed of 1 copy each of membrane proteins PsbA, PsbB, PsbC, PsbD, PsbE, PsbF, PsbH, PsbI, PsbJ, PsbK, PsbL, PsbM, PsbT, PsbX, PsbY, PsbZ, Psb30/Ycf12, at least 3 peripheral proteins of the oxygen-evolving complex and a large number of cofactors. It forms dimeric complexes. It depends on The D1/D2 heterodimer binds P680, chlorophylls that are the primary electron donor of PSII, and subsequent electron acceptors. It shares a non-heme iron and each subunit binds pheophytin, quinone, additional chlorophylls, carotenoids and lipids. D1 provides most of the ligands for the Mn4-Ca-O5 cluster of the oxygen-evolving complex (OEC). There is also a Cl(-1) ion associated with D1 and D2, which is required for oxygen evolution. The PSII complex binds additional chlorophylls, carotenoids and specific lipids. as a cofactor. Tyr-161 forms a radical intermediate that is referred to as redox-active TyrZ, YZ or Y-Z. In terms of processing, C-terminally processed by CTPA; processing is essential to allow assembly of the oxygen-evolving complex and thus photosynthetic growth.

It localises to the plastid. The protein localises to the chloroplast thylakoid membrane. It catalyses the reaction 2 a plastoquinone + 4 hnu + 2 H2O = 2 a plastoquinol + O2. In terms of biological role, this is one of the two reaction center proteins of photosystem II. Photosystem II (PSII) is a light-driven water:plastoquinone oxidoreductase that uses light energy to abstract electrons from H(2)O, generating O(2) and a proton gradient subsequently used for ATP formation. It consists of a core antenna complex that captures photons, and an electron transfer chain that converts photonic excitation into a charge separation. The D1/D2 (PsbA/PsbD) reaction center heterodimer binds P680, the primary electron donor of PSII as well as several subsequent electron acceptors. This chain is Photosystem II protein D1, found in Pisum sativum (Garden pea).